Here is a 303-residue protein sequence, read N- to C-terminus: MIKQRTLKNTIRATGVGLHSGEKVYLTLKPAPVDTGIVFRRADLDPVVEIPARAANVGETTMSTTLVNGDVKVDTVEHLLSAMAGLGIDNAYVELSASEVPIMDGSAGPFVFLIQSAGLEEQDAAKKFIRILREVTVEEGDKRATFLPFEGFKVSFEIDFDHPVLRNRTQSASVDFSSTSFVKEVSRARTFGFMRDIEYLRKHNLALGGSVENAIVVDEDGVLNEDGLRYEDEFVKHKILDAIGDLYLLGNSLIGEFKGYKSGHALNNQLLRKLIAETDAWEVVTFEDASTAPISYMRPVAAV.

Residues histidine 78, histidine 237, and aspartate 241 each contribute to the Zn(2+) site. The Proton donor role is filled by histidine 264.

The protein belongs to the LpxC family. It depends on Zn(2+) as a cofactor.

The enzyme catalyses a UDP-3-O-[(3R)-3-hydroxyacyl]-N-acetyl-alpha-D-glucosamine + H2O = a UDP-3-O-[(3R)-3-hydroxyacyl]-alpha-D-glucosamine + acetate. It participates in glycolipid biosynthesis; lipid IV(A) biosynthesis; lipid IV(A) from (3R)-3-hydroxytetradecanoyl-[acyl-carrier-protein] and UDP-N-acetyl-alpha-D-glucosamine: step 2/6. Functionally, catalyzes the hydrolysis of UDP-3-O-myristoyl-N-acetylglucosamine to form UDP-3-O-myristoylglucosamine and acetate, the committed step in lipid A biosynthesis. The chain is UDP-3-O-acyl-N-acetylglucosamine deacetylase from Pseudomonas putida (strain GB-1).